Reading from the N-terminus, the 179-residue chain is Peptide deformylase (179 aa).

Fe cation is bound by residues Cys102 and His144. Glu145 is a catalytic residue. A Fe cation-binding site is contributed by His148.

The protein belongs to the polypeptide deformylase family. Fe(2+) is required as a cofactor.

The catalysed reaction is N-terminal N-formyl-L-methionyl-[peptide] + H2O = N-terminal L-methionyl-[peptide] + formate. Functionally, removes the formyl group from the N-terminal Met of newly synthesized proteins. Requires at least a dipeptide for an efficient rate of reaction. N-terminal L-methionine is a prerequisite for activity but the enzyme has broad specificity at other positions. The polypeptide is Peptide deformylase (Wolbachia sp. subsp. Drosophila simulans (strain wRi)).